Here is a 318-residue protein sequence, read N- to C-terminus: MSNDHPQPLDAAEIPRFAGIPTFMRLPAFTDPAALQVGLIGVPWDGGTTNRAGARHGPREVRNLSSLMRKVHHVSRIAPYDLVRVGDLGDAPVNPIDLLDSLRRIEGFYRQVHAAGTLPLSVGGDHLVTLPIFRALGRERPLGMVHFDAHSDTNDRYFGDNPYTHGTPFRRAIEEGLLDPLRTVQIGIRGSVYSPDDDAFARECGIRVIHMEEFVELGVEATLAEARRVVGAGPTYVSFDVDVLDPAFAPGTGTPEIGGMTSLQAQQLVRGLRGLDLVGADVVEVSPPFDVGGATALVGATMMFELLCLLAESAARSA.

Mn(2+)-binding residues include H126, D148, H150, D152, D240, and D242.

The protein belongs to the arginase family. Agmatinase subfamily. Homohexamer. It depends on Mn(2+) as a cofactor.

It catalyses the reaction 3-guanidinopropanoate + H2O = urea + beta-alanine. Its function is as follows. Catalyzes the hydrolysis of 3-guanidinopropanoate to beta-alanine and urea. Possesses low activity against 4-guanidinobutanoate. Has no activity against arginine and agmatine. This chain is Guanidinopropionase (gpuA), found in Pseudomonas aeruginosa (strain ATCC 15692 / DSM 22644 / CIP 104116 / JCM 14847 / LMG 12228 / 1C / PRS 101 / PAO1).